We begin with the raw amino-acid sequence, 492 residues long: WD repeat-containing protein JIP5 (492 aa).

WD repeat units follow at residues 127-166, 178-217, 236-274, 276-317, and 365-405; these read RHKGSVRAMCFDSKGDNIFSVGSDNVLKKANTMTGKVVKK, KKNDKFTKLCASQTHPFILIGDESGNIHVINSENLALSNS, RSAYKFISLGQTTLAYFDVRDKDAKPNVAGNEDGKILIS, DQED…LEDQ, and RNHS…VEEN. 2 stretches are compositionally biased toward acidic residues: residues 404-414 and 422-433; these read ENASVESDSDE and DLSDDTSSDDET. The tract at residues 404 to 472 is disordered; the sequence is ENASVESDSD…SKSVKKRKIM (69 aa). The span at 449–462 shows a compositional bias: basic and acidic residues; it reads KDLKEDHQEEKESN.

As to quaternary structure, interacts with BUD27 and GIS1.

It is found in the nucleus. It localises to the nucleolus. The polypeptide is WD repeat-containing protein JIP5 (JIP5) (Saccharomyces cerevisiae (strain ATCC 204508 / S288c) (Baker's yeast)).